We begin with the raw amino-acid sequence, 560 residues long: Dihydroxy-acid dehydratase (560 aa).

D78 contacts Mg(2+). Position 119 (C119) interacts with [2Fe-2S] cluster. Mg(2+) is bound by residues D120 and K121. K121 bears the N6-carboxylysine mark. C192 is a [2Fe-2S] cluster binding site. E446 provides a ligand contact to Mg(2+). S472 functions as the Proton acceptor in the catalytic mechanism.

Belongs to the IlvD/Edd family. Homodimer. [2Fe-2S] cluster is required as a cofactor. The cofactor is Mg(2+).

It catalyses the reaction (2R)-2,3-dihydroxy-3-methylbutanoate = 3-methyl-2-oxobutanoate + H2O. It carries out the reaction (2R,3R)-2,3-dihydroxy-3-methylpentanoate = (S)-3-methyl-2-oxopentanoate + H2O. The protein operates within amino-acid biosynthesis; L-isoleucine biosynthesis; L-isoleucine from 2-oxobutanoate: step 3/4. Its pathway is amino-acid biosynthesis; L-valine biosynthesis; L-valine from pyruvate: step 3/4. Functions in the biosynthesis of branched-chain amino acids. Catalyzes the dehydration of (2R,3R)-2,3-dihydroxy-3-methylpentanoate (2,3-dihydroxy-3-methylvalerate) into 2-oxo-3-methylpentanoate (2-oxo-3-methylvalerate) and of (2R)-2,3-dihydroxy-3-methylbutanoate (2,3-dihydroxyisovalerate) into 2-oxo-3-methylbutanoate (2-oxoisovalerate), the penultimate precursor to L-isoleucine and L-valine, respectively. The chain is Dihydroxy-acid dehydratase from Anaeromyxobacter dehalogenans (strain 2CP-C).